A 197-amino-acid polypeptide reads, in one-letter code: TLE family member 5 (197 aa).

Residues 166–197 (LSALGSQTHLSKEDKNGHDGDTHQEDDGEKSD) are CCN domain. The segment at 170–197 (GSQTHLSKEDKNGHDGDTHQEDDGEKSD) is disordered. Residues 175–197 (LSKEDKNGHDGDTHQEDDGEKSD) are compositionally biased toward basic and acidic residues. Ser-196 is modified (phosphoserine).

Belongs to the WD repeat Groucho/TLE family. In terms of assembly, homooligomer and heterooligomer with other family members. Binds TCF7 and the NF-kappa-B subunit RELA. Interacts with PHF12. Interacts (via Q domain) with SIX3. Interacts with SIX6. Ubiquitinated by XIAP/BIRC4. As to expression, ubiquitously expressed in developing embryos by midgestation, a wide expression is conserved in adult. In mouse, abundantly expressed in muscle, heart and brain.

The protein resides in the nucleus. Functionally, transcriptional corepressor. Acts as a dominant repressor towards other family members. Inhibits NF-kappa-B-regulated gene expression. May be required for the initiation and maintenance of the differentiated state. Essential for the transcriptional repressor activity of SIX3 during retina and lens development. This chain is TLE family member 5, found in Mus musculus (Mouse).